A 191-amino-acid chain; its full sequence is MLSLHQLQFKNLFDLNITFLPSSITYIKGANGCGKSSLLRMIAGIMQPSSGHIYYRNCNINNIAKLYCTYIGHNLGLKSEMTVFENLKFWSEIYNSAATVYAAIHYFKLHDLLDKKCYSLSSGMQKIVAIARLIACQSDLWLLDEVETNLSKENRALLNNLIVMKANSGGIVLLSSHLESSIKSAQILRID.

The ABC transporter domain occupies 2–190 (LSLHQLQFKN…SIKSAQILRI (189 aa)). An ATP-binding site is contributed by 29–36 (GANGCGKS).

It belongs to the ABC transporter superfamily. CcmA exporter (TC 3.A.1.107) family. In terms of assembly, the complex is composed of two ATP-binding proteins (CcmA) and two transmembrane proteins (CcmB).

The protein resides in the cell inner membrane. It carries out the reaction heme b(in) + ATP + H2O = heme b(out) + ADP + phosphate + H(+). Part of the ABC transporter complex CcmAB involved in the biogenesis of c-type cytochromes; once thought to export heme, this seems not to be the case, but its exact role is uncertain. Responsible for energy coupling to the transport system. The protein is Cytochrome c biogenesis ATP-binding export protein CcmA of Rickettsia conorii (strain ATCC VR-613 / Malish 7).